The sequence spans 345 residues: Phosphoribosylformylglycinamidine cyclo-ligase (345 aa).

This sequence belongs to the AIR synthase family.

Its subcellular location is the cytoplasm. It carries out the reaction 2-formamido-N(1)-(5-O-phospho-beta-D-ribosyl)acetamidine + ATP = 5-amino-1-(5-phospho-beta-D-ribosyl)imidazole + ADP + phosphate + H(+). It functions in the pathway purine metabolism; IMP biosynthesis via de novo pathway; 5-amino-1-(5-phospho-D-ribosyl)imidazole from N(2)-formyl-N(1)-(5-phospho-D-ribosyl)glycinamide: step 2/2. In Shewanella frigidimarina (strain NCIMB 400), this protein is Phosphoribosylformylglycinamidine cyclo-ligase.